We begin with the raw amino-acid sequence, 1020 residues long: MESYLNENFGDVKPKNSSDEALQRWRKLCWIVKNPKRRFRFTANLSKRSEAEAIRRSNQEKFRVAVLVSQAALQFINSLKLSSEYTLPEEVRKAGFEICPDELGSIVEGHDLKKLKIHGGTEGLTEKLSTSIASGISTSEDLLSVRKEIYGINQFTESPSRGFWLFVWEALQDTTLMILAACAFVSLIVGILMEGWPIGAHDGLGIVASILLVVFVTATSDYRQSLQFKDLDAEKKKIVVQVTRDKLRQKISIYDLLPGDVVHLGIGDQIPADGLFISGFSVLINESSLTGESEPVSVSVEHPFLLSGTKVQDGSCKMLVTTVGMRTQWGKLMATLSEGGDDETPLQVKLNGVATIIGKIGLFFAVITFAVLVQGLANQKRLDNSHWIWTADELMAMLEYFAVAVTIVVVAVPEGLPLAVTLSLAFAMKKMMNDKALVRNLAACETMGSATTICSDKTGTLTTNHMTVVKACICEQAKEVNGPDAAMKFASGIPESAVKLLLQSIFTNTGGEIVVGKGNKTEILGTPTETALLEFGLSLGGDFQEVRQASNVVKVEPFNSTKKRMGVVIELPERHFRAHCKGASEIVLDSCDKYINKDGEVVPLDEKSTSHLKNIIEEFASEALRTLCLAYFEIGDEFSLEAPIPSGGYTCIGIVGIKDPVRPGVKESVAICKSAGITVRMVTGDNLTTAKAIARECGILTDDGIAIEGPEFREKSDEELLKLIPKLQVMARSSPMDKHTLVRLLRTMFQEVVAVTGDGTNDAPALHEADIGLAMGISGTEVAKESADVIILDDNFSTIVTVAKWGRSVYINIQKFVQFQLTVNVVALIVNFLSACLTGNAPLTAVQLLWVNMIMDTLGALALATEPPQDDLMKRSPVGRKGNFISNVMWRNILGQSLYQLVIIWCLQTKGKTMFGLDGPDSDLTLNTLIFNIFVFCQVFNEISSREMEKIDVFKGILKNYVFVAVLTCTVVFQVIIIELLGTFADTTPLNLGQWLVSIILGFLGMPVAAALKMIPVGSH.

An N-acetylmethionine modification is found at M1. Topologically, residues 1–162 (MESYLNENFG…NQFTESPSRG (162 aa)) are stromal. An interaction with calmodulin region spans residues 21-32 (ALQRWRKLCWIV). Position 46 is a phosphoserine; by CPK (S46). The chain crosses the membrane as a helical span at residues 163–183 (FWLFVWEALQDTTLMILAACA). The Lumenal portion of the chain corresponds to 184 to 201 (FVSLIVGILMEGWPIGAH). The chain crosses the membrane as a helical span at residues 202–222 (DGLGIVASILLVVFVTATSDY). Residues 223 to 350 (RQSLQFKDLD…DDETPLQVKL (128 aa)) are Stromal-facing. Residues 351 to 370 (NGVATIIGKIGLFFAVITFA) traverse the membrane as a helical segment. Topologically, residues 371–400 (VLVQGLANQKRLDNSHWIWTADELMAMLEY) are lumenal. Residues 401–418 (FAVAVTIVVVAVPEGLPL) form a helical membrane-spanning segment. At 419-813 (AVTLSLAFAM…KWGRSVYINI (395 aa)) the chain is on the stromal side. The active-site 4-aspartylphosphate intermediate is D456. Residues D758 and D762 each contribute to the Mg(2+) site. A helical transmembrane segment spans residues 814–832 (QKFVQFQLTVNVVALIVNF). Residues 833-843 (LSACLTGNAPL) are Lumenal-facing. The chain crosses the membrane as a helical span at residues 844–864 (TAVQLLWVNMIMDTLGALALA). Over 865 to 884 (TEPPQDDLMKRSPVGRKGNF) the chain is Stromal. Residues 885 to 907 (ISNVMWRNILGQSLYQLVIIWCL) traverse the membrane as a helical segment. Over 908-919 (QTKGKTMFGLDG) the chain is Lumenal. The helical transmembrane segment at 920-941 (PDSDLTLNTLIFNIFVFCQVFN) threads the bilayer. The Stromal portion of the chain corresponds to 942–959 (EISSREMEKIDVFKGILK). The chain crosses the membrane as a helical span at residues 960–981 (NYVFVAVLTCTVVFQVIIIELL). Residues 982–991 (GTFADTTPLN) are Lumenal-facing. The helical transmembrane segment at 992 to 1013 (LGQWLVSIILGFLGMPVAAALK) threads the bilayer. At 1014–1020 (MIPVGSH) the chain is on the stromal side.

Belongs to the cation transport ATPase (P-type) (TC 3.A.3) family. Type IIB subfamily. Expressed at higher levels in roots than in leaves.

Its subcellular location is the plastid. It is found in the chloroplast inner membrane. The enzyme catalyses Ca(2+)(in) + ATP + H2O = Ca(2+)(out) + ADP + phosphate + H(+). With respect to regulation, activated by calmodulin. Its function is as follows. This magnesium-dependent enzyme catalyzes the hydrolysis of ATP coupled with the translocation of calcium from the cytosol out of the cell or into organelles. This Arabidopsis thaliana (Mouse-ear cress) protein is Calcium-transporting ATPase 1 (ACA1).